We begin with the raw amino-acid sequence, 168 residues long: Pathogenesis-related protein 1A (168 aa).

A signal peptide spans 1–30 (MGFVLFSQLPSFLLVSTLLLFLVISHSCRA). In terms of domain architecture, SCP spans 38-156 (LDAHNTARAD…NGGYVVSCNY (119 aa)).

It belongs to the CRISP family. In terms of processing, three disulfide bonds are present.

Its subcellular location is the vacuole. Its function is as follows. Probably involved in the defense reaction of plants against pathogens. This chain is Pathogenesis-related protein 1A, found in Nicotiana tabacum (Common tobacco).